The sequence spans 129 residues: Small ribosomal subunit protein eS6 (129 aa).

Residues 53-88 form a disordered region; that stretch reads TGGSDTSGRPMRPDVRGVTTKEIMSDGGVGFEPTTD.

It belongs to the eukaryotic ribosomal protein eS6 family.

This Haloarcula marismortui (strain ATCC 43049 / DSM 3752 / JCM 8966 / VKM B-1809) (Halobacterium marismortui) protein is Small ribosomal subunit protein eS6 (rps6e).